Reading from the N-terminus, the 221-residue chain is uncharacterized protein (221 aa).

Residues 20-63 (DFDRAMLDFQAMFPSLSNSHIEYVLRKYDGDVSATINELLYDNT) form the CUE domain. The tract at residues 131–194 (EEKKKKSCSD…GPYIGEGEVK (64 aa)) is disordered. Low complexity predominate over residues 156-166 (KNSKNSKISVN). Residues 169 to 183 (KKLEPRRRSDEDRVP) are compositionally biased toward basic and acidic residues.

This is an uncharacterized protein from Caenorhabditis elegans.